The primary structure comprises 340 residues: HPr kinase/phosphorylase (340 aa).

Active-site residues include His-153 and Lys-174. Residue 168-175 (GNSGLGKS) participates in ATP binding. Ser-175 lines the Mg(2+) pocket. Asp-192 serves as the catalytic Proton acceptor; for phosphorylation activity. Proton donor; for dephosphorylation activity. The tract at residues 216 to 225 (MEIRGLGVVD) is important for the catalytic mechanism of both phosphorylation and dephosphorylation. Residue Glu-217 participates in Mg(2+) binding. Arg-258 is an active-site residue. The segment at 279–284 (PINPGK) is important for the catalytic mechanism of dephosphorylation.

Belongs to the HPrK/P family. In terms of assembly, homohexamer. It depends on Mg(2+) as a cofactor.

It catalyses the reaction [HPr protein]-L-serine + ATP = [HPr protein]-O-phospho-L-serine + ADP + H(+). The enzyme catalyses [HPr protein]-O-phospho-L-serine + phosphate + H(+) = [HPr protein]-L-serine + diphosphate. Catalyzes the ATP- as well as the pyrophosphate-dependent phosphorylation of a specific serine residue in HPr, a phosphocarrier protein of the phosphoenolpyruvate-dependent sugar phosphotransferase system (PTS). HprK/P also catalyzes the pyrophosphate-producing, inorganic phosphate-dependent dephosphorylation (phosphorolysis) of seryl-phosphorylated HPr (P-Ser-HPr). The protein is HPr kinase/phosphorylase of Prosthecochloris aestuarii (strain DSM 271 / SK 413).